Reading from the N-terminus, the 357-residue chain is S-adenosyl-L-methionine:benzoic acid/salicylic acid carboxyl methyltransferase 3 (357 aa).

Tyr-18 is a binding site for S-adenosyl-L-homocysteine. Gln-25 serves as a coordination point for benzoate. S-adenosyl-L-homocysteine-binding residues include Cys-59, Asn-64, Asp-96, Leu-97, Ser-135, and Phe-136. Benzoate is bound at residue Trp-157. Mg(2+) contacts are provided by Asn-168, Asp-254, Phe-256, and Asn-257. Gln-260 is a benzoate binding site.

The protein belongs to the methyltransferase superfamily. Type-7 methyltransferase family.

The enzyme catalyses benzoate + S-adenosyl-L-methionine = methyl benzoate + S-adenosyl-L-homocysteine. It functions in the pathway aromatic compound metabolism. Its function is as follows. Converts benzoic acid into the volatile ester methyl benzoates. This scent, mostly produced in a rhythmical, diurnal manner, attracts the pollinators. This is S-adenosyl-L-methionine:benzoic acid/salicylic acid carboxyl methyltransferase 3 from Petunia hybrida (Petunia).